A 512-amino-acid chain; its full sequence is Immunoglobulin delta heavy chain (512 aa).

Ig-like domains lie at 1 to 97 and 135 to 227; these read RLQL…MYYC and PDVF…KEIF. The tract at residues 1–129 is variable (V) domain, involved in antigen recognition; the sequence is RLQLQESGPG…GQGTTVHVSS (129 aa). 2 cysteine pairs are disulfide-bonded: C22-C97 and C157-C213. The constant (C) domain stretch occupies residues 130 to 512; the sequence is APTKAPDVFP…VSYVTDHGPM (383 aa). Positions 225–296 are disordered; it reads EIFRWPESPK…TPECPSHTQP (72 aa). A compositionally biased stretch (polar residues) spans 235–247; it reads AQASSVPTAQPQA. S238 carries an O-linked (GalNAc...) serine glycan. 4 O-linked (GalNAc...) threonine glycosylation sites follow: T255, T256, T260, and T261. Basic and acidic residues predominate over residues 267 to 287; it reads GGEEKKKEKEKEEQEERETKT. 2 consecutive Ig-like domains span residues 304 to 392 and 396 to 502; these read PAVQ…RLMA and PAAQ…RSLE. Intrachain disulfides connect C319-C378 and C423-C484. N-linked (GlcNAc...) asparagine glycosylation is found at N354, N445, and N496.

Immunoglobulins are composed of two identical heavy chains and two identical light chains; disulfide-linked. An IgD molecule contains thus a delta heavy chain combined with either a kappa or a lambda light chains. Kappa light chains are found predominantly on the membrane IgD (mIgD) form and lambda on the secreted IgD (sIgD) form, this fact is poorly understood. Membrane-bound IgD molecules are non-covalently associated with a heterodimer of CD79A and CD79B.

It localises to the secreted. The protein localises to the cell membrane. In terms of biological role, immunoglobulins, also known as antibodies, are membrane-bound or secreted glycoproteins produced by B lymphocytes. In the recognition phase of humoral immunity, the membrane-bound immunoglobulins serve as receptors which, upon binding of a specific antigen, trigger the clonal expansion and differentiation of B lymphocytes into immunoglobulins-secreting plasma cells. Secreted immunoglobulins mediate the effector phase of humoral immunity, which results in the elimination of bound antigens. The antigen binding site is formed by the variable domain of one heavy chain, together with that of its associated light chain. Thus, each immunoglobulin has two antigen binding sites with remarkable affinity for a particular antigen. The variable domains are assembled by a process called V-(D)-J rearrangement and can then be subjected to somatic hypermutations which, after exposure to antigen and selection, allow affinity maturation for a particular antigen. IgD is the major antigen receptor isotype on the surface of most peripheral B cells, where it is coexpressed with IgM. The membrane-bound IgD (mIgD) induces the phosphorylation of CD79A and CD79B by the Src family of protein tyrosine kinases. Soluble IgD (sIgD) concentration in serum is below those of IgG, IgA, and IgM but much higher than that of IgE. IgM and IgD molecules present on B cells have identical V regions and antigen-binding sites. After the antigen binds to the B cell receptor, the secreted form sIgD is shut off. IgD is a potent inducer of TNF, IL1B, and IL1RN. IgD also induces release of IL6, IL10, and LIF from peripheral blood mononuclear cells. Monocytes seem to be the main producers of cytokines in vitro in the presence of IgD. The chain is Immunoglobulin delta heavy chain from Homo sapiens (Human).